Consider the following 452-residue polypeptide: cAMP-dependent protein kinase regulatory subunit (452 aa).

Residues 28–212 are dimerization and phosphorylation; the sequence is QFCANYFNSK…ELSKTLGSNF (185 aa). Positions 74-163 are disordered; that stretch reads IMTTNKRQPS…APPVPKSKIP (90 aa). The span at 75 to 84 shows a compositional bias: polar residues; that stretch reads MTTNKRQPSF. A compositionally biased stretch (basic and acidic residues) spans 95 to 106; it reads SIDHHHDDDPKE. S173 is modified (phosphoserine). Residues 213–330 and 333–451 each bind a nucleoside 3',5'-cyclic phosphate; these read LFRQ…FLKD and VLSS…QGSS. 3',5'-cyclic AMP contacts are provided by E278, R287, E399, and R408.

Belongs to the cAMP-dependent kinase regulatory chain family. Tetramer, composed of 2 regulatory (R) and 2 catalytic (C) subunits. In the presence of cAMP it dissociates into 2 active monomeric C subunits and an R dimer.

The chain is cAMP-dependent protein kinase regulatory subunit (PKAR) from Debaryomyces hansenii (strain ATCC 36239 / CBS 767 / BCRC 21394 / JCM 1990 / NBRC 0083 / IGC 2968) (Yeast).